A 188-amino-acid chain; its full sequence is Inosine triphosphate pyrophosphatase (188 aa).

12-17 (TGNANK) contacts ITP. Glu40 is a binding site for Mg(2+). Residues Lys52, 68 to 69 (DT), Lys85, 144 to 147 (FGWD), Lys165, and 170 to 171 (HR) each bind ITP.

It belongs to the HAM1 NTPase family. As to quaternary structure, homodimer. Requires Mg(2+) as cofactor. The cofactor is Mn(2+).

It is found in the cytoplasm. Its subcellular location is the nucleus. It catalyses the reaction ITP + H2O = IMP + diphosphate + H(+). It carries out the reaction dITP + H2O = dIMP + diphosphate + H(+). The enzyme catalyses XTP + H2O = XMP + diphosphate + H(+). Pyrophosphatase that hydrolyzes non-canonical purine nucleotides such as inosine triphosphate (ITP), deoxyinosine triphosphate (dITP) or xanthosine 5'-triphosphate (XTP) to their respective monophosphate derivatives. The enzyme does not distinguish between the deoxy- and ribose forms. Probably excludes non-canonical purines from RNA and DNA precursor pools, thus preventing their incorporation into RNA and DNA and avoiding chromosomal lesions. The protein is Inosine triphosphate pyrophosphatase of Podospora anserina (strain S / ATCC MYA-4624 / DSM 980 / FGSC 10383) (Pleurage anserina).